The chain runs to 263 residues: MSVEGLLSEVKHFNAHHLDAALGEQLFYGGKRVFSDVKPGTSSGGDHGCKGGKSELKGAIHNAKHAADKALNKEGGEDVSKLREEHSALAKKVDDLASLVAELQLQLSTLRQGQTSSVAAPAAAPAAAKEEAAGDDDFDLFGSEDEEEDEEKKKVVEERLAAYAAKKATKAGPIAKSSVILDVKPWDDETDLGEMEKLVRSIEMDGLVWGGAKLIPIGYGIKKLQIITVIEDLKVSVDDLIEKITGDFEDHVQSVDIVAFNKI.

Serine 2 carries the N-acetylserine modification. Positions 112 to 153 are disordered; that stretch reads QGQTSSVAAPAAAPAAAKEEAAGDDDFDLFGSEDEEEDEEKK. Positions 133–150 are enriched in acidic residues; that stretch reads AGDDDFDLFGSEDEEEDE.

It belongs to the EF-1-beta/EF-1-delta family. In terms of assembly, EF-1 is composed of 4 subunits: alpha, beta, delta, and gamma.

Its function is as follows. EF-1-beta and EF-1-delta stimulate the exchange of GDP bound to EF-1-alpha to GTP. This Caenorhabditis elegans protein is Probable elongation factor 1-beta/1-delta 2.